A 135-amino-acid polypeptide reads, in one-letter code: Meiotically up-regulated gene 116 protein (135 aa).

Residues 20 to 39 traverse the membrane as a helical segment; sequence YFHSFHCFFLLCFTVMLCVV. Residues 81 to 101 are disordered; that stretch reads QTPTKKGNKTKKKRKKEKKKE. Positions 86–98 are enriched in basic residues; that stretch reads KGNKTKKKRKKEK.

Its subcellular location is the mitochondrion membrane. Has a role in meiosis. The polypeptide is Meiotically up-regulated gene 116 protein (mug116) (Schizosaccharomyces pombe (strain 972 / ATCC 24843) (Fission yeast)).